The chain runs to 170 residues: RNA pyrophosphohydrolase (170 aa).

The 151-residue stretch at 8-158 folds into the Nudix hydrolase domain; that stretch reads PYRTCVGMML…KRPVYERVVK (151 aa). Residues 46–67 carry the Nudix box motif; the sequence is GGVDPGEDTWLAAKRELYEETS.

It belongs to the Nudix hydrolase family. RppH subfamily. Requires a divalent metal cation as cofactor.

In terms of biological role, accelerates the degradation of transcripts by removing pyrophosphate from the 5'-end of triphosphorylated RNA, leading to a more labile monophosphorylated state that can stimulate subsequent ribonuclease cleavage. The sequence is that of RNA pyrophosphohydrolase from Nitrobacter winogradskyi (strain ATCC 25391 / DSM 10237 / CIP 104748 / NCIMB 11846 / Nb-255).